Consider the following 548-residue polypeptide: Chaperonin GroEL (548 aa).

Residues 29-32 (TMGP), Lys50, 86-90 (DGTTT), Gly414, 478-480 (NAA), and Asp494 each bind ATP.

The protein belongs to the chaperonin (HSP60) family. As to quaternary structure, forms a cylinder of 14 subunits composed of two heptameric rings stacked back-to-back. Interacts with the co-chaperonin GroES.

It localises to the cytoplasm. The enzyme catalyses ATP + H2O + a folded polypeptide = ADP + phosphate + an unfolded polypeptide.. Functionally, together with its co-chaperonin GroES, plays an essential role in assisting protein folding. The GroEL-GroES system forms a nano-cage that allows encapsulation of the non-native substrate proteins and provides a physical environment optimized to promote and accelerate protein folding. Its function is as follows. May play a protective role against the defense mechanisms generated by the infected macrophages. This is Chaperonin GroEL from Legionella pneumophila subsp. pneumophila (strain Philadelphia 1 / ATCC 33152 / DSM 7513).